A 276-amino-acid polypeptide reads, in one-letter code: Integrin-binding sialoprotein (276 aa).

A signal peptide spans 1-16 (MRSALLLACLLATASA). Residues 54–251 (HRYKGSDSSE…EEPARGDSYR (198 aa)) are disordered. The span at 61-75 (SSEEEGDGSEEEEEG) shows a compositional bias: acidic residues. The segment covering 106 to 119 (QDCKGGQKGTRGDS) has biased composition (basic and acidic residues). A Cell attachment site motif is present at residues 116–118 (RGD). Acidic residues predominate over residues 120 to 144 (GDEDSDEEEEEEEEEEEEEEVEEQD). Positions 145-165 (VSVNGTSTNTTAETPHGNNTV) are enriched in polar residues. N-linked (GlcNAc...) asparagine glycosylation is found at asparagine 148, asparagine 153, and asparagine 162. Residues 167 to 188 (AEEEEDDDEEEEEEEEEEEEAE) are compositionally biased toward acidic residues. Low complexity predominate over residues 189-200 (ATTAAATTAQDE). Positions 228 to 230 (RGD) match the Cell attachment site motif. Positions 246 to 248 (RGD) match the Integrin-binding motif motif. Residues tyrosine 272 and tyrosine 273 each carry the sulfotyrosine modification.

Monomer. Interacts with integrins; the interaction promotes cell adhesion. Post-translationally, phosphorylated on serine and threonine residues.

The protein localises to the secreted. In terms of biological role, binds tightly to hydroxyapatite. Appears to form an integral part of the mineralized matrix. Probably important to cell-matrix interaction. Promotes adhesion and migration of various cells via the alpha-V/beta-3 integrin receptor (ITGAV:ITGB3). The protein is Integrin-binding sialoprotein (IBSP) of Gallus gallus (Chicken).